The sequence spans 355 residues: NAD-dependent protein deacylase sirtuin-6 (355 aa).

Residue Ser2 is modified to N-acetylserine. A Phosphoserine modification is found at Ser10. Positions 27–272 (PEELERKVWE…TQLMKHLGLE (246 aa)) constitute a Deacetylase sirtuin-type domain. Lys33 bears the N6-acetyllysine mark. The NAD(+) site is built by Ala53, Thr57, Phe64, Arg65, Trp71, Gln113, and His133. His133 acts as the Proton acceptor in catalysis. Zn(2+) contacts are provided by Cys141, Cys144, and Cys166. Lys170 is covalently cross-linked (Glycyl lysine isopeptide (Lys-Gly) (interchain with G-Cter in ubiquitin)). Cys177 is a Zn(2+) binding site. NAD(+)-binding residues include Gly214, Ser216, Asn240, Gln242, and Val258. The interval 284–355 (KALPPLPRPP…KRVKAEVTPS (72 aa)) is disordered. The span at 287 to 296 (PPLPRPPTPK) shows a compositional bias: pro residues. Thr294 carries the phosphothreonine modification. Ser303 and Ser330 each carry phosphoserine.

Belongs to the sirtuin family. Class IV subfamily. Homodimer; binds to nucleosomes and DNA ends as a homodimer. Interacts with RELA; interferes with RELA binding to target DNA. Interacts with SMARCA5; promoting recruitment of SMARCA5/SNF2H to double-strand breaks (DSBs) sites. Interacts with the mTORC2 complex; preventing the ability of SIRT6 to deacetylate FOXO1. Interacts with the CLOCK-BMAL1 complex; recruited by the CLOCK-BMAL1 complex to regulate expression of clock-controlled genes. Interacts with CSNK2A2; preventing CSNK2A2 localization to the nucleus. In terms of processing, acetylated at Lys-33. Deacetylation at Lys-33 by SIRT1 promotes homomultimerization and binding to double-strand breaks (DSBs) sites. Phosphorylation at Ser-10 by MAPK8/JNK1 in response to oxidative stress stimulates the mono-ADP-ribosyltransferase activity on PARP1, leading to PARP1 recruitment to double-strand breaks (DSBs). Post-translationally, monoubiquitinated at Lys-170 by STUB1/CHIP, preventing its degradation by the proteasome. In terms of processing, sumoylated, leading to specifically decrease ability to deacetylate histone H3 at 'Lys-56' (H3K56ac).

The protein resides in the nucleus. It is found in the chromosome. It localises to the telomere. Its subcellular location is the endoplasmic reticulum. The catalysed reaction is N(6)-acetyl-L-lysyl-[protein] + NAD(+) + H2O = 2''-O-acetyl-ADP-D-ribose + nicotinamide + L-lysyl-[protein]. The enzyme catalyses N(6)-tetradecanoyl-L-lysyl-[protein] + NAD(+) + H2O = 2''-O-tetradecanoyl-ADP-D-ribose + nicotinamide + L-lysyl-[protein]. It carries out the reaction N(6)-hexadecanoyl-L-lysyl-[protein] + NAD(+) + H2O = 2''-O-hexadecanoyl-ADP-D-ribose + nicotinamide + L-lysyl-[protein]. It catalyses the reaction L-lysyl-[protein] + NAD(+) = N(6)-(ADP-D-ribosyl)-L-lysyl-[protein] + nicotinamide + H(+). The catalysed reaction is L-arginyl-[protein] + NAD(+) = N(omega)-(ADP-D-ribosyl)-L-arginyl-[protein] + nicotinamide + H(+). Compared to the defatty-acylase activity, the protein deacetylase activity is weak in vitro, and requires activation. The histone deacetylase activity is strongly activated upon binding to nucleosomes and chromatin in vivo. Two molecules of SIRT6 associate with the acidic patch of one nucleosome, while the C-terminal disordered region of SIRT6 associates with nucleosomal DNA, leading to efficient histone deacetylation. The protein-lysine deacetylase activity is also activated by long-chain free fatty-acids. Its function is as follows. NAD-dependent protein deacetylase, deacylase and mono-ADP-ribosyltransferase that plays an essential role in DNA damage repair, telomere maintenance, metabolic homeostasis, inflammation, tumorigenesis and aging. Displays protein-lysine deacetylase or defatty-acylase (demyristoylase and depalmitoylase) activity, depending on the context. Acts as a key histone deacetylase by catalyzing deacetylation of histone H3 at 'Lys-9', 'Lys-18' and 'Lys-56' (H3K9ac, H3K18ac and H3K56ac, respectively), suppressing target gene expression of several transcription factors, including NF-kappa-B. Acts as an inhibitor of transcription elongation by mediating deacetylation of H3K9ac and H3K56ac, preventing release of NELFE from chromatin and causing transcriptional pausing. Involved in DNA repair by promoting double-strand break (DSB) repair: acts as a DSB sensor by recognizing and binding DSB sites, leading to (1) recruitment of DNA repair proteins, such as SMARCA5/SNF2H, and (2) deacetylation of histone H3K9ac and H3K56ac. SIRT6 participation to DSB repair is probably involved in extension of life span. Also promotes DNA repair by deacetylating non-histone proteins, such as DDB2 and p53/TP53. Specifically deacetylates H3K18ac at pericentric heterochromatin, thereby maintaining pericentric heterochromatin silencing at centromeres and protecting against genomic instability and cellular senescence. Involved in telomere maintenance by catalyzing deacetylation of histone H3 in telomeric chromatin, regulating telomere position effect and telomere movement in response to DNA damage. Required for embryonic stem cell differentiation by mediating histone deacetylation of H3K9ac. Plays a major role in metabolism by regulating processes such as glycolysis, gluconeogenesis, insulin secretion and lipid metabolism. Inhibits glycolysis via histone deacetylase activity and by acting as a corepressor of the transcription factor HIF1A, thereby controlling the expression of multiple glycolytic genes. Has tumor suppressor activity by repressing glycolysis, thereby inhibiting the Warburg effect. Also regulates glycolysis and tumorigenesis by mediating deacetylation and nuclear export of non-histone proteins, such as isoform M2 of PKM (PKM2). Acts as a negative regulator of gluconeogenesis by mediating deacetylation of non-histone proteins, such as FOXO1 and KAT2A/GCN5. Promotes beta-oxidation of fatty acids during fasting by catalyzing deacetylation of NCOA2, inducing coactivation of PPARA. Acts as a regulator of lipid catabolism in brown adipocytes, both by catalyzing deacetylation of histones and non-histone proteins, such as FOXO1. Also acts as a regulator of circadian rhythms, both by regulating expression of clock-controlled genes involved in lipid and carbohydrate metabolism, and by catalyzing deacetylation of PER2. The defatty-acylase activity is specifically involved in regulation of protein secretion. Has high activity toward long-chain fatty acyl groups and mediates protein-lysine demyristoylation and depalmitoylation of target proteins, such as RRAS2 and TNF, thereby regulating their secretion. Also acts as a mono-ADP-ribosyltransferase by mediating mono-ADP-ribosylation of PARP1, TRIM28/KAP1 or SMARCC2/BAF170. Mono-ADP-ribosyltransferase activity is involved in DNA repair, cellular senescence, repression of LINE-1 retrotransposon elements and regulation of transcription. The sequence is that of NAD-dependent protein deacylase sirtuin-6 from Castor canadensis (American beaver).